Consider the following 367-residue polypeptide: Phosphoribosylaminoimidazole-succinocarboxamide synthase (367 aa).

It belongs to the SAICAR synthetase family.

It catalyses the reaction 5-amino-1-(5-phospho-D-ribosyl)imidazole-4-carboxylate + L-aspartate + ATP = (2S)-2-[5-amino-1-(5-phospho-beta-D-ribosyl)imidazole-4-carboxamido]succinate + ADP + phosphate + 2 H(+). The protein operates within purine metabolism; IMP biosynthesis via de novo pathway; 5-amino-1-(5-phospho-D-ribosyl)imidazole-4-carboxamide from 5-amino-1-(5-phospho-D-ribosyl)imidazole-4-carboxylate: step 1/2. In Shewanella sp. (strain MR-4), this protein is Phosphoribosylaminoimidazole-succinocarboxamide synthase.